A 426-amino-acid polypeptide reads, in one-letter code: Histidine--tRNA ligase (426 aa).

Belongs to the class-II aminoacyl-tRNA synthetase family.

The protein resides in the cytoplasm. It catalyses the reaction tRNA(His) + L-histidine + ATP = L-histidyl-tRNA(His) + AMP + diphosphate + H(+). This Saccharolobus islandicus (strain Y.N.15.51 / Yellowstone #2) (Sulfolobus islandicus) protein is Histidine--tRNA ligase.